The following is a 223-amino-acid chain: Deoxyribose-phosphate aldolase (223 aa).

The active-site Proton donor/acceptor is Asp-89. The active-site Schiff-base intermediate with acetaldehyde is Lys-152. Lys-181 serves as the catalytic Proton donor/acceptor.

Belongs to the DeoC/FbaB aldolase family. DeoC type 1 subfamily.

It is found in the cytoplasm. It catalyses the reaction 2-deoxy-D-ribose 5-phosphate = D-glyceraldehyde 3-phosphate + acetaldehyde. It functions in the pathway carbohydrate degradation; 2-deoxy-D-ribose 1-phosphate degradation; D-glyceraldehyde 3-phosphate and acetaldehyde from 2-deoxy-alpha-D-ribose 1-phosphate: step 2/2. Functionally, catalyzes a reversible aldol reaction between acetaldehyde and D-glyceraldehyde 3-phosphate to generate 2-deoxy-D-ribose 5-phosphate. The sequence is that of Deoxyribose-phosphate aldolase from Listeria innocua serovar 6a (strain ATCC BAA-680 / CLIP 11262).